Consider the following 668-residue polypeptide: MSNNNNKDDSELQSRTHYYNPDRTAIPVKDDVDQLDKFGSPKLSANDHSFTNTDSVTSEDRPFSSPVSTLTSNSANFSDSSLQNSPVHPIPSPALSPTLNLGSRPDVKRVSSGGYFALPKQLTSIRQTHRPMSQQHRVPSFHPASDTAPPSPIPFHHHLRKKGSSMSIPGQTSIVSSNNGSEATNPPEEKLAIIMVGLPARGKSYIVNKLVRYYNWLQYNCKAFNVGNFRRKHASHSHDDASFFDPSNEEASKLRESFAMDTLDALLQWFEEEDGVVGIFDATNSTSKRRKAIVDHLSKVPYVTTLFIESICNDEQLIAANMRMKLVGPDYKDLNPEQSLRDFQERVRMYERKYEPLGKSEEDLNLRYIKVINVGKKVVAFNIRGFLAGQAVFFLLNFNLSPRQIWVTRHGESVDNVRGRIGGNAELTPLGRQFSEDLALFIDEKRDEFQERLYNDYSKESHLLQHGSHSFNGKQFETSFNCLTPSENTVNDPQVLDPEDEERLEKPYSVWTSMMQRSIQTAAYFDEEQYDIKAMRMLNEICSGICDGLTYEEIKSIYPKEYEARKLDKLNYRYPGSGGESYLDVIYRLQSVIVEIERMKHHVLVIGHRVITRIIIAYFLGCRREDIAYLNVPLHTVYCIEPQPYGTDFYQYNYDPNTRKFSRVPFSL.

Residues 1 to 14 (MSNNNNKDDSELQS) show a composition bias toward basic and acidic residues. Disordered regions lie at residues 1 to 105 (MSNN…GSRP) and 136 to 185 (HRVP…EATN). 3 stretches are compositionally biased toward polar residues: residues 46-56 (NDHSFTNTDSV), 65-86 (SPVS…QNSP), and 164-184 (SSMS…SEAT). 197–204 (GLPARGKS) serves as a coordination point for ATP. Catalysis depends on residues Asp-281 and Cys-312. Arg-346 lines the beta-D-fructose 6-phosphate pocket. The active site involves Glu-540. The active-site Proton donor is His-608.

The catalysed reaction is beta-D-fructose 6-phosphate + ATP = beta-D-fructose 2,6-bisphosphate + ADP + H(+). Its function is as follows. Synthesis of fructose 2,6-bisphosphate. The polypeptide is Probable 6-phosphofructo-2-kinase PB17E12.14c (Schizosaccharomyces pombe (strain 972 / ATCC 24843) (Fission yeast)).